The chain runs to 67 residues: DNA-directed RNA polymerase subunit omega (67 aa).

It belongs to the RNA polymerase subunit omega family. In terms of assembly, the RNAP catalytic core consists of 2 alpha, 1 beta, 1 beta' and 1 omega subunit. When a sigma factor is associated with the core the holoenzyme is formed, which can initiate transcription.

The enzyme catalyses RNA(n) + a ribonucleoside 5'-triphosphate = RNA(n+1) + diphosphate. Promotes RNA polymerase assembly. Latches the N- and C-terminal regions of the beta' subunit thereby facilitating its interaction with the beta and alpha subunits. In Paracidovorax citrulli (strain AAC00-1) (Acidovorax citrulli), this protein is DNA-directed RNA polymerase subunit omega.